Reading from the N-terminus, the 287-residue chain is ATP synthase gamma chain (287 aa).

The protein belongs to the ATPase gamma chain family. As to quaternary structure, F-type ATPases have 2 components, CF(1) - the catalytic core - and CF(0) - the membrane proton channel. CF(1) has five subunits: alpha(3), beta(3), gamma(1), delta(1), epsilon(1). CF(0) has three main subunits: a, b and c.

Its subcellular location is the cell membrane. In terms of biological role, produces ATP from ADP in the presence of a proton gradient across the membrane. The gamma chain is believed to be important in regulating ATPase activity and the flow of protons through the CF(0) complex. In Staphylococcus carnosus (strain TM300), this protein is ATP synthase gamma chain.